A 244-amino-acid chain; its full sequence is Cobalt transport protein CbiM (244 aa).

An N-terminal signal peptide occupies residues M1–A28. 6 helical membrane-spanning segments follow: residues P37–I57, L71–V91, L103–F123, T135–Y155, S166–V186, and F206–V226.

Belongs to the CbiM family. As to quaternary structure, forms an energy-coupling factor (ECF) transporter complex composed of an ATP-binding protein (A component, CbiO), a transmembrane protein (T component, CbiQ) and 2 possible substrate-capture proteins (S components, CbiM and CbiN) of unknown stoichimetry.

It is found in the cell membrane. Its pathway is cofactor biosynthesis; adenosylcobalamin biosynthesis. Functionally, part of the energy-coupling factor (ECF) transporter complex CbiMNOQ involved in cobalt import. The sequence is that of Cobalt transport protein CbiM from Listeria seeligeri serovar 1/2b (strain ATCC 35967 / DSM 20751 / CCM 3970 / CCUG 15530 / CIP 100100 / LMG 11386 / NCTC 11856 / SLCC 3954 / 1120).